The sequence spans 736 residues: MNHSPQSARPVSIMRRFLDSEAAGGITLMAAAALALIVANSPFAQTYFDALHLYIGPLSLAHWINDALMAIFFLLVGLEIKREMLDGQLASWPNRMLPGIAAAGGVILPAIIFAVLNHDNPAKLRGWAVPSATDIAFALGVLSLLGSRAPSSLKVFLATLAILDDLAAVVIIAIFYTAEISMPYLGAAFITAAVLFVMNRMDVVKLLPYLISAVILWFFVFNSGVHATVAGVVAALMIPLKPAPGRPDDMTSPLHKLEHALAKPVAFIVVPIFGFANAGISFKGLEASVLGDTLTLGILLGLFLGKQFGVFGAAWLAIKTGLAEKPMGASWVQLYGVAILCGIGFTMSIFIGLLSFPSDLMQTETKIGVLSGSALSAICGYLLLRAARPDQSAANPLWKADESPEAKNFGRFLCVFHFASYIASTYCTERLQAASSLLRRSSLEFALPGLLKRLIPRRFRAVETEIPVVRLHGAIMTGGTSLRPTLSLASTAGILEKAFADKHAPAVAISINSPGGAPVQSRLIYRRIRDLAAEHQKKVFVFVEDVAASGGYMIALAGDEIIADPSSIVGSIGVVSASFGFPELLKKIGVERRVYTAGSNKVTLDPFQPEKAEDIERLKALQLEIHATFIDMVKERRAGKLGDNPDLFSGLFWTGTTAASLGLIDGLGDMLSFLRKTYGDKVKLKLIQPQRGLLGRKLPGIGMDSGSVEPAQIAAHLGDGLLCVAEEKAIWARYGL.

Residues 1–387 (MNHSPQSARP…ICGYLLLRAA (387 aa)) form a na(+)/H(+) antiporter NhaA region. 11 helical membrane passes run 23–43 (AGGI…NSPF), 58–78 (LSLA…LVGL), 96–116 (MLPG…FAVL), 126–146 (GWAV…SLLG), 155–175 (VFLA…IAIF), 178–198 (AEIS…LFVM), 201–221 (MDVV…FFVF), 265–285 (VAFI…FKGL), 298–318 (ILLG…WLAI), 334–354 (LYGV…IGLL), and 367–387 (IGVL…LRAA). The tract at residues 388-736 (RPDQSAANPL…EKAIWARYGL (349 aa)) is peptidase S49.

This sequence in the N-terminal section; belongs to the NhaA Na(+)/H(+) (TC 2.A.33) antiporter family. It in the C-terminal section; belongs to the peptidase S49 family.

Its subcellular location is the cell inner membrane. It catalyses the reaction Na(+)(in) + 2 H(+)(out) = Na(+)(out) + 2 H(+)(in). Na(+)/H(+) antiporter that extrudes sodium in exchange for external protons. In Brucella melitensis biotype 1 (strain ATCC 23456 / CCUG 17765 / NCTC 10094 / 16M), this protein is Na(+)/H(+) antiporter NhaA.